The chain runs to 869 residues: Structure-specific endonuclease subunit SLX4 (869 aa).

A compositionally biased stretch (low complexity) spans 40-59 (SPLSLPSPTSLLDFLSTSTS). Disordered regions lie at residues 40-79 (SPLSLPSPTSLLDFLSTSTSRGPARSDTDGDKTQGKEVLD), 92-116 (NRVVSGTGGKAATGKKLKRRTESPG), 165-199 (KANQTVSLQPETKKSAPKGCNDTTQPADNGHINDL), 293-323 (GLSDSRQSSITEDSESATSKPRRVKAKNPPK), 351-388 (TLLSDEPGKEKNVAKRTSGARCAKPGRKKSATTEKKNE), 418-437 (ANGHSEDRHEQNEGTSHISN), and 630-774 (KTSN…ASET). Over residues 63–79 (ARSDTDGDKTQGKEVLD) the composition is skewed to basic and acidic residues. Composition is skewed to polar residues over residues 165 to 174 (KANQTVSLQP) and 294 to 311 (LSDSRQSSITEDSESATS). The segment covering 312–322 (KPRRVKAKNPP) has biased composition (basic residues). Composition is skewed to polar residues over residues 647-657 (VDESTQGQSLG) and 664-673 (SIPQTATTQV). The span at 688–700 (VPVPSRRSTSTSK) shows a compositional bias: low complexity. A compositionally biased stretch (polar residues) spans 765-774 (IPSTGTASET).

The protein belongs to the SLX4 family. In terms of assembly, forms a heterodimer with SLX1. In terms of processing, phosphorylated in response to DNA damage.

The protein resides in the nucleus. Functionally, regulatory subunit of the SLX1-SLX4 structure-specific endonuclease that resolves DNA secondary structures generated during DNA repair and recombination. Has endonuclease activity towards branched DNA substrates, introducing single-strand cuts in duplex DNA close to junctions with ss-DNA. The protein is Structure-specific endonuclease subunit SLX4 of Paracoccidioides brasiliensis (strain Pb18).